Here is a 338-residue protein sequence, read N- to C-terminus: tRNA N6-adenosine threonylcarbamoyltransferase (338 aa).

Fe cation-binding residues include His-111 and His-115. Substrate contacts are provided by residues 134–138, Asp-167, Gly-180, and Asn-275; that span reads LLSGG. Asp-304 serves as a coordination point for Fe cation.

This sequence belongs to the KAE1 / TsaD family. Requires Fe(2+) as cofactor.

The protein resides in the cytoplasm. It carries out the reaction L-threonylcarbamoyladenylate + adenosine(37) in tRNA = N(6)-L-threonylcarbamoyladenosine(37) in tRNA + AMP + H(+). In terms of biological role, required for the formation of a threonylcarbamoyl group on adenosine at position 37 (t(6)A37) in tRNAs that read codons beginning with adenine. Is involved in the transfer of the threonylcarbamoyl moiety of threonylcarbamoyl-AMP (TC-AMP) to the N6 group of A37, together with TsaE and TsaB. TsaD likely plays a direct catalytic role in this reaction. The protein is tRNA N6-adenosine threonylcarbamoyltransferase of Leptospira interrogans serogroup Icterohaemorrhagiae serovar copenhageni (strain Fiocruz L1-130).